The primary structure comprises 258 residues: Apolipoprotein A-I (258 aa).

Residues 1–18 (MKFLVLALTILLAAGTQA) form the signal peptide. Positions 32–63 (VKAALNMYIAQVKLTAQRSIDLLDDTEYKEYK) are 3 X approximate tandem repeats. 2 repeat units span residues 64–85 (MQLSQSLDNLQQFADSTSKSWP) and 86–106 (PTPRSSAPSCDATATVRAEVM). The tract at residues 64–258 (MQLSQSLDNL…WLSTRPSARP (195 aa)) is 10 X approximate tandem repeats. The stretch at 107 to 117 (KDVEDVRTQLE) is one 3; half-length repeat. A run of 7 repeats spans residues 118–139 (PKRAELTEVLNKHIDEYRKKLE), 140–161 (PLIKQHIELRRTEMDAFRAKID), 162–183 (PVVEEMRAKVAVNVEETKTKLM), 184–205 (PIVEIVRAKLTERLEELRTLAA), 206–227 (PYAEEYKEQMFKAVGEVREKVA), 228–238 (PLSEDFKARWA), and 239–258 (PPPRRPSKSSWLSTRPSARP). The disordered stretch occupies residues 233-258 (FKARWAPPPRRPSKSSWLSTRPSARP). Polar residues predominate over residues 246–258 (KSSWLSTRPSARP).

The protein belongs to the apolipoprotein A1/A4/E family. Major protein of plasma HDL, also found in chylomicrons. Expressed in liver, intestine and muscle.

It localises to the secreted. Functionally, participates in the reverse transport of cholesterol from tissues to the liver for excretion by promoting cholesterol efflux from tissues and by acting as a cofactor for the lecithin cholesterol acyltransferase (LCAT). This is Apolipoprotein A-I (apoa1) from Salmo salar (Atlantic salmon).